The primary structure comprises 255 residues: F-box/SPRY domain-containing protein 1 (255 aa).

Residues 3–51 (DPVAALCNYNVLEVIFSYLELEDLSHCSQVCKSWYHFLNDENSDVWRWH) form the F-box domain. The B30.2/SPRY domain occupies 61-253 (LKSDLLSSVS…VSMVYLGTPL (193 aa)).

It belongs to the FBXO45/Fsn family. As to quaternary structure, component of an E3 ubiquitin ligase complex composed of hiw and Fsn.

Its subcellular location is the synapse. It functions in the pathway protein modification; protein ubiquitination. In terms of biological role, required in the presynaptic motoneuron to down-regulate the levels of wnd and restrain synaptic terminal growth at the neuromuscular junction (NMJ). The sequence is that of F-box/SPRY domain-containing protein 1 from Drosophila erecta (Fruit fly).